A 60-amino-acid polypeptide reads, in one-letter code: Large ribosomal subunit protein bL32 (60 aa).

It belongs to the bacterial ribosomal protein bL32 family.

This chain is Large ribosomal subunit protein bL32, found in Pseudothermotoga lettingae (strain ATCC BAA-301 / DSM 14385 / NBRC 107922 / TMO) (Thermotoga lettingae).